Reading from the N-terminus, the 122-residue chain is Small ribosomal subunit protein uS13 (122 aa).

The tract at residues 98–122 (VRGQKTKSNARTRKGPRPSRIKKKK) is disordered. Residues 101 to 122 (QKTKSNARTRKGPRPSRIKKKK) show a composition bias toward basic residues.

It belongs to the universal ribosomal protein uS13 family. Part of the 30S ribosomal subunit. Forms a loose heterodimer with protein S19. Forms two bridges to the 50S subunit in the 70S ribosome.

Located at the top of the head of the 30S subunit, it contacts several helices of the 16S rRNA. In the 70S ribosome it contacts the 23S rRNA (bridge B1a) and protein L5 of the 50S subunit (bridge B1b), connecting the 2 subunits; these bridges are implicated in subunit movement. Contacts the tRNAs in the A and P-sites. This Thermosipho africanus (strain TCF52B) protein is Small ribosomal subunit protein uS13.